The following is a 398-amino-acid chain: Tyrosine--tRNA ligase (398 aa).

A 'HIGH' region motif is present at residues 42–51 (PTAPDIHLGH). The 'KMSKS' region signature appears at 226–230 (KMSKS). Residue Lys-229 participates in ATP binding. An S4 RNA-binding domain is found at 336-397 (LAIANLLKDA…GKRKFAKVTL (62 aa)).

This sequence belongs to the class-I aminoacyl-tRNA synthetase family. TyrS type 2 subfamily. In terms of assembly, homodimer.

The protein localises to the cytoplasm. It catalyses the reaction tRNA(Tyr) + L-tyrosine + ATP = L-tyrosyl-tRNA(Tyr) + AMP + diphosphate + H(+). In terms of biological role, catalyzes the attachment of tyrosine to tRNA(Tyr) in a two-step reaction: tyrosine is first activated by ATP to form Tyr-AMP and then transferred to the acceptor end of tRNA(Tyr). The sequence is that of Tyrosine--tRNA ligase from Shewanella oneidensis (strain ATCC 700550 / JCM 31522 / CIP 106686 / LMG 19005 / NCIMB 14063 / MR-1).